A 301-amino-acid chain; its full sequence is Mitochondrial import receptor subunit TOM40 homolog (301 aa).

Residues 1–19 show a composition bias toward polar residues; the sequence is MATPTESELASPIPQTNPG. The tract at residues 1 to 20 is disordered; sequence MATPTESELASPIPQTNPGS.

This sequence belongs to the Tom40 family. Forms part of the preprotein translocase complex of the outer mitochondrial membrane (TOM complex). Interacts with mitochondrial targeting sequences. Ubiquitously expressed, but highly expressed in the pharyngeal muscles, the nerve ring, the intestine, gonadal sheath and in the tail hypodermis.

Its subcellular location is the mitochondrion outer membrane. In terms of biological role, channel-forming protein essential for import of protein precursors into mitochondria. Specifically required for nnt-1 accumulation in the mitochondria and may be involved in the secretion of daf-28/insulin from the mitochondria. Required for embryonic and larval development. In Caenorhabditis elegans, this protein is Mitochondrial import receptor subunit TOM40 homolog.